An 876-amino-acid chain; its full sequence is Probable DNA-directed RNA polymerase catalytic subunit (876 aa).

It belongs to the RNA polymerase beta chain family. In terms of assembly, interacts with LEF-4, LEF-9, and p47.

The catalysed reaction is RNA(n) + a ribonucleoside 5'-triphosphate = RNA(n+1) + diphosphate. In terms of biological role, component of the viral DNA-dependent RNA polymerase which is composed of four equimolar subunits of LEF-4, LEF-8, LEF-9, and p47. Plays an essential role in late and very late gene expression. In Autographa californica nuclear polyhedrosis virus (AcMNPV), this protein is Probable DNA-directed RNA polymerase catalytic subunit (LEF-8).